A 94-amino-acid polypeptide reads, in one-letter code: Immune protein Tsi6 (94 aa).

Immunity protein that plays a role in preventing early activation of toxin Tse6. In Pseudomonas aeruginosa (strain ATCC 15692 / DSM 22644 / CIP 104116 / JCM 14847 / LMG 12228 / 1C / PRS 101 / PAO1), this protein is Immune protein Tsi6.